The chain runs to 275 residues: Formamidopyrimidine-DNA glycosylase (275 aa).

Proline 2 acts as the Schiff-base intermediate with DNA in catalysis. Residue glutamate 3 is the Proton donor of the active site. Lysine 58 (proton donor; for beta-elimination activity) is an active-site residue. 2 residues coordinate DNA: histidine 91 and arginine 110. The FPG-type zinc finger occupies 238-272; it reads QVYGQTGKSCPRCGQAIVKLKVGGRGTHICPKCQK. Residue arginine 262 is the Proton donor; for delta-elimination activity of the active site.

It belongs to the FPG family. In terms of assembly, monomer. Requires Zn(2+) as cofactor.

The catalysed reaction is Hydrolysis of DNA containing ring-opened 7-methylguanine residues, releasing 2,6-diamino-4-hydroxy-5-(N-methyl)formamidopyrimidine.. It catalyses the reaction 2'-deoxyribonucleotide-(2'-deoxyribose 5'-phosphate)-2'-deoxyribonucleotide-DNA = a 3'-end 2'-deoxyribonucleotide-(2,3-dehydro-2,3-deoxyribose 5'-phosphate)-DNA + a 5'-end 5'-phospho-2'-deoxyribonucleoside-DNA + H(+). Its function is as follows. Involved in base excision repair of DNA damaged by oxidation or by mutagenic agents. Acts as a DNA glycosylase that recognizes and removes damaged bases. Has a preference for oxidized purines, such as 7,8-dihydro-8-oxoguanine (8-oxoG). Has AP (apurinic/apyrimidinic) lyase activity and introduces nicks in the DNA strand. Cleaves the DNA backbone by beta-delta elimination to generate a single-strand break at the site of the removed base with both 3'- and 5'-phosphates. The protein is Formamidopyrimidine-DNA glycosylase of Streptococcus pyogenes serotype M3 (strain ATCC BAA-595 / MGAS315).